Here is a 487-residue protein sequence, read N- to C-terminus: Glutamate--tRNA ligase 2 (487 aa).

A 'HIGH' region motif is present at residues Pro31–Gly41. The 'KMSKS' region signature appears at Pro254–Arg258. Lys257 provides a ligand contact to ATP.

The protein belongs to the class-I aminoacyl-tRNA synthetase family. Glutamate--tRNA ligase type 1 subfamily. As to quaternary structure, monomer.

The protein resides in the cytoplasm. The enzyme catalyses tRNA(Glu) + L-glutamate + ATP = L-glutamyl-tRNA(Glu) + AMP + diphosphate. Its function is as follows. Catalyzes the attachment of glutamate to tRNA(Glu) in a two-step reaction: glutamate is first activated by ATP to form Glu-AMP and then transferred to the acceptor end of tRNA(Glu). The chain is Glutamate--tRNA ligase 2 from Thermotoga maritima (strain ATCC 43589 / DSM 3109 / JCM 10099 / NBRC 100826 / MSB8).